The following is a 359-amino-acid chain: Tropomodulin-1 (359 aa).

Residues 36–61 (ELDPDNALLPAGLRQKDQTTKAPTGP) are disordered. The interval 39-138 (PDNALLPAGL…CDIAAILGMH (100 aa)) is tropomyosin-binding.

This sequence belongs to the tropomodulin family. In terms of assembly, binds to the N-terminus of tropomyosin and to actin. Interacts with FLII. Highly expressed in the erythrocyte, heart and skeletal muscle.

Its subcellular location is the cytoplasm. The protein localises to the cytoskeleton. In terms of biological role, blocks the elongation and depolymerization of the actin filaments at the pointed end. The Tmod/TM complex contributes to the formation of the short actin protofilament, which in turn defines the geometry of the membrane skeleton. May play an important role in regulating the organization of actin filaments by preferentially binding to a specific tropomyosin isoform at its N-terminus. The chain is Tropomodulin-1 (TMOD1) from Homo sapiens (Human).